A 251-amino-acid polypeptide reads, in one-letter code: Imidazole glycerol phosphate synthase subunit HisF (251 aa).

Catalysis depends on residues D12 and D131.

Belongs to the HisA/HisF family. Heterodimer of HisH and HisF.

The protein resides in the cytoplasm. It catalyses the reaction 5-[(5-phospho-1-deoxy-D-ribulos-1-ylimino)methylamino]-1-(5-phospho-beta-D-ribosyl)imidazole-4-carboxamide + L-glutamine = D-erythro-1-(imidazol-4-yl)glycerol 3-phosphate + 5-amino-1-(5-phospho-beta-D-ribosyl)imidazole-4-carboxamide + L-glutamate + H(+). It functions in the pathway amino-acid biosynthesis; L-histidine biosynthesis; L-histidine from 5-phospho-alpha-D-ribose 1-diphosphate: step 5/9. Functionally, IGPS catalyzes the conversion of PRFAR and glutamine to IGP, AICAR and glutamate. The HisF subunit catalyzes the cyclization activity that produces IGP and AICAR from PRFAR using the ammonia provided by the HisH subunit. The chain is Imidazole glycerol phosphate synthase subunit HisF from Helicobacter hepaticus (strain ATCC 51449 / 3B1).